The following is a 166-amino-acid chain: UPF0304 protein VIBHAR_01542 (166 aa).

It belongs to the UPF0304 family.

In Vibrio campbellii (strain ATCC BAA-1116), this protein is UPF0304 protein VIBHAR_01542.